The sequence spans 481 residues: MKAEKVMEREIETTPIEPLSPMSHMLSSPNFFIVITFGFKTRCNRSAFVDGINNTLINAPRFSSKMEINYKKKGEPVWIPVKLRVDDHIIVPDLEYSNIQNPDQFVEDYTSNIANIPMDMSKPLWEFHLLNMKTSKAESLAIVKIHHSIGDGMSLMSLLLACSRKISDPDALVSNTTATKKPADSMAWWLFVGFWFMIRVTFTTIVEFSKLMLTVCFLEDTKNPLMGNPSDGFQSWKVVHRIISFEDVKLIKDTMNMKVNDVLLGMTQAGLSRYLSSKYDGSTAEKKKILEKLRVRGAVAINLRPATKIEDLADMMAKGSKCRWGNFIGTVIFPLWVKSEKDPLEYIRRAKATMDRKKISLEAFFFYGIIKFTLKFFGGKAVEAFGKRIFGHTSLAFSNVKGPDEEISFFHHPISYIAGSALVGAQALNIHFISYVDKIVINLAVDTTTIQDPNRLCDDMVEALEIIKSATQGEIFHKTEV.

At 1–185 (MKAEKVMERE…TTATKKPADS (185 aa)) the chain is on the cytoplasmic side. The active-site Proton acceptor is His147. A helical transmembrane segment spans residues 186 to 206 (MAWWLFVGFWFMIRVTFTTIV). At 207–481 (EFSKLMLTVC…QGEIFHKTEV (275 aa)) the chain is on the lumenal side.

It in the N-terminal section; belongs to the long-chain O-acyltransferase family. As to expression, expressed in flowers, siliques, top parts of stems, and leaves. Not found in roots, seeds and young seedlings.

The protein localises to the cell membrane. It localises to the endoplasmic reticulum membrane. The catalysed reaction is a long chain fatty alcohol + a fatty acyl-CoA = a wax ester + CoA. The enzyme catalyses an acyl-CoA + a 1,2-diacyl-sn-glycerol = a triacyl-sn-glycerol + CoA. It participates in glycerolipid metabolism; triacylglycerol biosynthesis. Its pathway is lipid metabolism. In terms of biological role, bifunctional wax ester synthase/diacylglycerol acyltransferase. Involved in cuticular wax biosynthesis. Required to reduce leaf water loss, especially during drought. This is Wax ester synthase/diacylglycerol acyltransferase 1 from Arabidopsis thaliana (Mouse-ear cress).